The sequence spans 273 residues: HTH-type transcriptional activator RhaS (273 aa).

The HTH araC/xylS-type domain maps to 174–272 (YQLLDWLQNN…SQSPRDLRSQ (99 aa)). DNA-binding regions (H-T-H motif) lie at residues 191 to 212 (PELA…KNKT) and 239 to 262 (VTDI…KREF).

As to quaternary structure, binds DNA as a dimer.

It localises to the cytoplasm. Functionally, activates expression of the rhaBAD and rhaT operons. The chain is HTH-type transcriptional activator RhaS from Yersinia pestis bv. Antiqua (strain Antiqua).